We begin with the raw amino-acid sequence, 138 residues long: Transcription antitermination protein NusB (138 aa).

The protein belongs to the NusB family.

Involved in transcription antitermination. Required for transcription of ribosomal RNA (rRNA) genes. Binds specifically to the boxA antiterminator sequence of the ribosomal RNA (rrn) operons. This is Transcription antitermination protein NusB from Serratia proteamaculans (strain 568).